A 429-amino-acid chain; its full sequence is Protein ABERRANT PANICLE ORGANIZATION 1 (429 aa).

The span at 1–11 (MMNPRRLPPLP) shows a compositional bias: pro residues. The interval 1-21 (MMNPRRLPPLPSSTSSASAAD) is disordered. Residues 25-71 (PRVWRRLPQPLVDRVLACLPTPSFLRLRAACRRFYHLLFSSPFLHSH) form the F-box domain. 2 helical membrane passes run 72–92 (LLLS…GHLL) and 112–132 (VAGG…LAFL). Kelch repeat units follow at residues 229–277 (MAFA…ELGG), 284–339 (RVAL…AEGG), and 350–397 (YVVL…GAAG).

Part of a putative SCF (ASK/Cullin/F-box) ubiquitin ligase complex. Interacts with FL/APO2. In terms of tissue distribution, expressed in seedlings, roots, leaves, shoot apical meristem (SAM), developing panicles, and, at lower levels, in developing seeds.

It localises to the membrane. It functions in the pathway protein modification; protein ubiquitination. Component of SCF(ASK-cullin-F-box) E3 ubiquitin ligase complexes, which may mediate the ubiquitination and subsequent proteasomal degradation of target proteins. Together with FL/APO2, involved in the temporal regulation of meristem identity during both vegetative and reproductive developments in an APO2-dependent manner. Promotes spikelet formation by suppressing the precocious conversion of inflorescence meristems to spikelet meristems, probably via a positive regulation of class-C floral homeotic genes, but not of class-B genes, and through the control of cell proliferation in meristems. Mediates culm development and strength/diameter enhancement at internodes. Required for the regulation of the plastochron, floral organ identity, and floral determinacy. Controls the number of primary rachis branches (PRBs). May trigger the formation of vascular bundle systems which, consequently, promote carbohydrate translocation to panicles. Involved in ozone-induced grain yield regulation. This is Protein ABERRANT PANICLE ORGANIZATION 1 from Oryza sativa subsp. indica (Rice).